Consider the following 131-residue polypeptide: 23S rRNA-specific endonuclease VapC20 (131 aa).

The 124-residue stretch at 2–125 (IFVDTSFWAA…FDGDFSAAGF (124 aa)) folds into the PINc domain. Residues Asp5 and Asp98 each coordinate Mg(2+).

Belongs to the PINc/VapC protein family. Mg(2+) is required as a cofactor.

In terms of biological role, toxic component of a type II toxin-antitoxin (TA) system. An endoribonuclease that cleaves 23S rRNA in the sarcin-ricin loop (SRL). The SRL sequence is highly conserved and is implicated in GTP hydrolysis by EF-Tu and EF-G. Acts on purified ribosomes but not on isolated RNA. Its toxic effect is neutralized by coexpression with cognate antitoxin VapB20. This Mycobacterium tuberculosis (strain CDC 1551 / Oshkosh) protein is 23S rRNA-specific endonuclease VapC20 (vapC20).